The following is a 199-amino-acid chain: Protein ZNRD2 (199 aa).

The residue at position 2 (Ala2) is an N-acetylalanine. Zn(2+) contacts are provided by Cys53, Cys56, Cys70, and Cys73. Positions 93-148 (LSQAREHQLASSTEPASSSRPPSQPPVPRPEHCEGAAAGLKAAQAPPLPAAPPNTD) are disordered. Ser94 bears the Phosphoserine mark. The segment covering 127 to 137 (GAAAGLKAAQA) has biased composition (low complexity). Positions 173-194 (SLETSIQLCGLIRACAEALGSL) match the Nuclear export signal motif.

In terms of assembly, homodimer. It depends on Zn(2+) as a cofactor. As to expression, expressed in the early postnatal brain.

It is found in the cytoplasm. In terms of biological role, might play a role in mitosis. Could be a centromere-associated protein. Antigenic molecule. May induce anti-centromere antibodies. This is Protein ZNRD2 (Znrd2) from Mus musculus (Mouse).